Here is a 204-residue protein sequence, read N- to C-terminus: Small ribosomal subunit protein uS7 (204 aa).

M1 bears the N-acetylmethionine mark. T2 carries the N-acetylthreonine; in 40S ribosomal protein S5, N-terminally processed modification. Position 14 is a phosphothreonine (T14). N6-acetyllysine; alternate is present on K47. Residue K47 forms a Glycyl lysine isopeptide (Lys-Gly) (interchain with G-Cter in SUMO2); alternate linkage. S142 is modified (phosphoserine).

The protein belongs to the universal ribosomal protein uS7 family. In terms of assembly, component of the small ribosomal subunit. Part of the small subunit (SSU) processome, composed of more than 70 proteins and the RNA chaperone small nucleolar RNA (snoRNA) U3.

It is found in the cytoplasm. Its subcellular location is the nucleus. The protein localises to the nucleolus. Functionally, component of the small ribosomal subunit. The ribosome is a large ribonucleoprotein complex responsible for the synthesis of proteins in the cell. Part of the small subunit (SSU) processome, first precursor of the small eukaryotic ribosomal subunit. During the assembly of the SSU processome in the nucleolus, many ribosome biogenesis factors, an RNA chaperone and ribosomal proteins associate with the nascent pre-rRNA and work in concert to generate RNA folding, modifications, rearrangements and cleavage as well as targeted degradation of pre-ribosomal RNA by the RNA exosome. This Bos taurus (Bovine) protein is Small ribosomal subunit protein uS7 (RPS5).